The sequence spans 163 residues: Nucleotide-binding protein cbdbA1256 (163 aa).

The protein belongs to the YajQ family.

Functionally, nucleotide-binding protein. This Dehalococcoides mccartyi (strain CBDB1) protein is Nucleotide-binding protein cbdbA1256.